A 260-amino-acid polypeptide reads, in one-letter code: Coiled-coil domain-containing protein 127 (260 aa).

Residues 76-139 adopt a coiled-coil conformation; that stretch reads AVISEHRRAV…EKSRLQPLRN (64 aa).

The protein is Coiled-coil domain-containing protein 127 (Ccdc127) of Mus musculus (Mouse).